Reading from the N-terminus, the 210-residue chain is MTTLNVARVYLRVSSEDQDLQRQEAIIGNARESGYYVAAVYREKASGARSDRPELLRMIEDLQPGEVVIAEKIDRISRLPLVEAEKLVDAIRAKGARLAVPGIVDLSQLTEASRGVAKVVLQGVQDMLLRVALQIARDDFEDRRERQRQGIDLAKGAGRYAGRKPDTKMHERVIALKSGGCSIAETARLAGVSVSQVKRVWAQNQTKDKV.

Residues 6-150 (VARVYLRVSS…EDRRERQRQG (145 aa)) form the Resolvase/invertase-type recombinase catalytic domain. Serine 14 (O-(5'-phospho-DNA)-serine intermediate) is an active-site residue. The segment at residues 191-210 (GVSVSQVKRVWAQNQTKDKV) is a DNA-binding region (H-T-H motif).

The protein belongs to the site-specific recombinase resolvase family.

Functionally, site-specific recombination protein. The sequence is that of Resolvase (stbA) from Pseudomonas syringae pv. tomato.